The sequence spans 426 residues: Trigger factor 1 (426 aa).

In terms of domain architecture, PPIase FKBP-type spans 163-248 (QDTVNIDFAG…VNKLKRKEYA (86 aa)).

The protein belongs to the FKBP-type PPIase family. Tig subfamily.

The protein resides in the cytoplasm. It carries out the reaction [protein]-peptidylproline (omega=180) = [protein]-peptidylproline (omega=0). Involved in protein export. Acts as a chaperone by maintaining the newly synthesized protein in an open conformation. Functions as a peptidyl-prolyl cis-trans isomerase. This Desulfitobacterium hafniense (strain Y51) protein is Trigger factor 1.